Here is a 94-residue protein sequence, read N- to C-terminus: Large ribosomal subunit protein uL23 (94 aa).

This sequence belongs to the universal ribosomal protein uL23 family. Part of the 50S ribosomal subunit. Contacts protein L29, and trigger factor when it is bound to the ribosome.

Its function is as follows. One of the early assembly proteins it binds 23S rRNA. One of the proteins that surrounds the polypeptide exit tunnel on the outside of the ribosome. Forms the main docking site for trigger factor binding to the ribosome. This chain is Large ribosomal subunit protein uL23, found in Dehalococcoides mccartyi (strain ATCC BAA-2100 / JCM 16839 / KCTC 5957 / BAV1).